Reading from the N-terminus, the 429-residue chain is Small ribosomal subunit protein bS1 (429 aa).

S1 motif domains are found at residues 55 to 128 (GDVV…LSKK), 144 to 211 (GDTV…SRKA), 231 to 299 (GEVV…LSIK), and 316 to 385 (GSVL…LSMK). A compositionally biased stretch (basic and acidic residues) spans 382–399 (LSMKALEEKPEREDRRGN). The interval 382-412 (LSMKALEEKPEREDRRGNDGSASRADIAAYK) is disordered.

Belongs to the bacterial ribosomal protein bS1 family.

In terms of biological role, binds mRNA; thus facilitating recognition of the initiation point. It is needed to translate mRNA with a short Shine-Dalgarno (SD) purine-rich sequence. The polypeptide is Small ribosomal subunit protein bS1 (rps1) (Leuconostoc lactis).